Reading from the N-terminus, the 405-residue chain is 11-beta-hydroxysteroid dehydrogenase type 2 (405 aa).

Residue 82–111 coordinates NAD(+); it reads TRAVLITGCDSGFGKETAKKLDSMGFTVLA. Serine 219 provides a ligand contact to substrate. Tyrosine 232 (proton acceptor) is an active-site residue. An essential for protein stability region spans residues 335–339; it reads RRRYY. The span at 377–387 shows a compositional bias: low complexity; it reads QPGQPGTTPPQ. The tract at residues 377–405 is disordered; the sequence is QPGQPGTTPPQDAAQDPNLSPGPSPAVAR. Positions 396–405 are enriched in pro residues; sequence SPGPSPAVAR.

It belongs to the short-chain dehydrogenases/reductases (SDR) family. As to quaternary structure, interacts with ligand-free cytoplasmic NR3C2. As to expression, expressed in kidney, placenta, pancreas, prostate, ovary, small intestine and colon, and in lower levels in the spleen and testis. At midgestation, expressed at high levels in placenta and in fetal kidney and, at much lower levels, in fetal lung and testis.

The protein resides in the microsome. It is found in the endoplasmic reticulum. The catalysed reaction is an 11beta-hydroxysteroid + NAD(+) = an 11-oxosteroid + NADH + H(+). It catalyses the reaction cortisol + NAD(+) = cortisone + NADH + H(+). It carries out the reaction corticosterone + NAD(+) = 11-dehydrocorticosterone + NADH + H(+). The enzyme catalyses 11beta,17beta-dihydroxyandrost-4-ene-3-one + NAD(+) = 17beta-hydroxyandrost-4-ene-3,11-dione + NADH + H(+). The catalysed reaction is 11beta-hydroxyandrost-4-ene-3,17-dione + NAD(+) = androst-4-ene-3,11,17-trione + NADH + H(+). The protein operates within steroid metabolism. With respect to regulation, inhibited by glycyrrhetinic acid (derived from liquorice). Catalyzes the conversion of biologically active 11beta-hydroxyglucocorticoids (11beta-hydroxysteroid) such as cortisol, to inactive 11-ketoglucocorticoids (11-oxosteroid) such as cortisone, in the presence of NAD(+). Functions as a dehydrogenase (oxidase), thereby decreasing the concentration of active glucocorticoids, thus protecting the nonselective mineralocorticoid receptor from occupation by glucocorticoids. Plays an important role in maintaining glucocorticoids balance during preimplantation and protects the fetus from excessive maternal corticosterone exposure. Catalyzes the oxidation of 11beta-hydroxytestosterone (11beta,17beta-dihydroxyandrost-4-ene-3-one) to 11-ketotestosterone (17beta-hydroxyandrost-4-ene-3,11-dione), a major bioactive androgen. Catalyzes the conversion of 11beta-hydroxyandrostenedione (11beta-hydroxyandrost-4-ene-3,17-dione) to 11-ketoandrostenedione (androst-4-ene-3,11,17-trione), which can be further metabolized to 11-ketotestosterone. Converts 7-beta-25-dihydroxycholesterol to 7-oxo-25-hydroxycholesterol in vitro. 7-beta-25-dihydroxycholesterol (not 7-oxo-25-hydroxycholesterol) acts as a ligand for the G-protein-coupled receptor (GPCR) Epstein-Barr virus-induced gene 2 (EBI2) and may thereby regulate immune cell migration. May protect ovulating oocytes and fertilizing spermatozoa from the adverse effects of cortisol. The sequence is that of 11-beta-hydroxysteroid dehydrogenase type 2 from Homo sapiens (Human).